A 105-amino-acid polypeptide reads, in one-letter code: UPF0235 protein Mchl_2407 (105 aa).

The protein belongs to the UPF0235 family.

This is UPF0235 protein Mchl_2407 from Methylorubrum extorquens (strain CM4 / NCIMB 13688) (Methylobacterium extorquens).